A 172-amino-acid chain; its full sequence is Ribosome maturation factor RimM (172 aa).

The 74-residue stretch at 96–169 (PDEFYDHQLE…AIEIDPPEGL (74 aa)) folds into the PRC barrel domain.

Belongs to the RimM family. As to quaternary structure, binds ribosomal protein uS19.

Its subcellular location is the cytoplasm. Its function is as follows. An accessory protein needed during the final step in the assembly of 30S ribosomal subunit, possibly for assembly of the head region. Essential for efficient processing of 16S rRNA. May be needed both before and after RbfA during the maturation of 16S rRNA. It has affinity for free ribosomal 30S subunits but not for 70S ribosomes. This Mycolicibacterium vanbaalenii (strain DSM 7251 / JCM 13017 / BCRC 16820 / KCTC 9966 / NRRL B-24157 / PYR-1) (Mycobacterium vanbaalenii) protein is Ribosome maturation factor RimM.